We begin with the raw amino-acid sequence, 74 residues long: Cell division protein ZapB (74 aa).

Positions 2–74 (TLDLLEQLES…LVGKIEETES (73 aa)) form a coiled coil.

This sequence belongs to the ZapB family. Homodimer. The ends of the coiled-coil dimer bind to each other, forming polymers. Interacts with FtsZ.

Its subcellular location is the cytoplasm. Non-essential, abundant cell division factor that is required for proper Z-ring formation. It is recruited early to the divisome by direct interaction with FtsZ, stimulating Z-ring assembly and thereby promoting cell division earlier in the cell cycle. Its recruitment to the Z-ring requires functional FtsA or ZipA. The chain is Cell division protein ZapB from Psychromonas ingrahamii (strain DSM 17664 / CCUG 51855 / 37).